The primary structure comprises 51 residues: Ribosome biogenesis protein Nop10 (51 aa).

It belongs to the NOP10 family.

Functionally, involved in ribosome biogenesis; more specifically in 18S rRNA pseudouridylation and in cleavage of pre-rRNA. This Nitrosopumilus maritimus (strain SCM1) protein is Ribosome biogenesis protein Nop10.